Consider the following 91-residue polypeptide: uncharacterized protein (91 aa).

An N-terminal signal peptide occupies residues 1–21 (MKIISKMLVGALALAVTNVYA).

It belongs to the BhsA/McbA family.

The protein resides in the periplasm. This is an uncharacterized protein from Escherichia coli (strain K12).